We begin with the raw amino-acid sequence, 169 residues long: tRNA (cytidine(56)-2'-O)-methyltransferase (169 aa).

S-adenosyl-L-methionine-binding positions include Leu77, 103–107 (GSEKV), and 121–128 (IGNQPHSE).

Belongs to the aTrm56 family. As to quaternary structure, homodimer.

Its subcellular location is the cytoplasm. The enzyme catalyses cytidine(56) in tRNA + S-adenosyl-L-methionine = 2'-O-methylcytidine(56) in tRNA + S-adenosyl-L-homocysteine + H(+). Specifically catalyzes the AdoMet-dependent 2'-O-ribose methylation of cytidine at position 56 in tRNAs. The chain is tRNA (cytidine(56)-2'-O)-methyltransferase from Sulfurisphaera tokodaii (strain DSM 16993 / JCM 10545 / NBRC 100140 / 7) (Sulfolobus tokodaii).